Here is a 543-residue protein sequence, read N- to C-terminus: Aspartate/alanine antiporter (543 aa).

Helical transmembrane passes span 4 to 26 (IGNF…GYLL), 33 to 55 (SFTL…LGVF), 88 to 110 (FGAK…AYAC), 117 to 139 (GPGI…GSSL), 159 to 178 (IPIV…LIFL), 362 to 381 (IINY…LGIV), 385 to 407 (VSGV…VQSI), 428 to 450 (SIGL…ISAI), 455 to 477 (ISVL…VICY), and 520 to 542 (VAPA…IVLL).

This sequence belongs to the AAE transporter (TC 2.A.81) family.

It localises to the cell membrane. Its function is as follows. Catalyzes the electrogenic exchange of aspartate with alanine. This chain is Aspartate/alanine antiporter (aspT), found in Tetragenococcus halophilus (Pediococcus halophilus).